The sequence spans 553 residues: uncharacterized protein (553 aa).

2 consecutive transmembrane segments (helical) span residues isoleucine 6–alanine 26 and serine 524–phenylalanine 544.

To M.jannaschii MJ0795 and MJ1506.

It localises to the cell membrane. This is an uncharacterized protein from Methanocaldococcus jannaschii (strain ATCC 43067 / DSM 2661 / JAL-1 / JCM 10045 / NBRC 100440) (Methanococcus jannaschii).